Consider the following 805-residue polypeptide: Phenylalanine--tRNA ligase beta subunit (805 aa).

In terms of domain architecture, tRNA-binding spans 39 to 154 (SEGLKKVVVG…DDATPGDPVF (116 aa)). The 76-residue stretch at 410-485 (VQPTTVTIDL…RLYGYDNLPA (76 aa)) folds into the B5 domain. 4 residues coordinate Mg(2+): D463, D469, E472, and E473. One can recognise an FDX-ACB domain in the interval 712-805 (SKFPSITRDV…LTDELGAEIR (94 aa)).

It belongs to the phenylalanyl-tRNA synthetase beta subunit family. Type 1 subfamily. As to quaternary structure, tetramer of two alpha and two beta subunits. Mg(2+) serves as cofactor.

Its subcellular location is the cytoplasm. It carries out the reaction tRNA(Phe) + L-phenylalanine + ATP = L-phenylalanyl-tRNA(Phe) + AMP + diphosphate + H(+). This is Phenylalanine--tRNA ligase beta subunit from Lactiplantibacillus plantarum (strain ATCC BAA-793 / NCIMB 8826 / WCFS1) (Lactobacillus plantarum).